The following is a 295-amino-acid chain: Fructose-bisphosphate aldolase class 1 (295 aa).

The Proton acceptor role is filled by Glu-176. Lys-213 (schiff-base intermediate with dihydroxyacetone-P) is an active-site residue.

The protein belongs to the class I fructose-bisphosphate aldolase family.

The catalysed reaction is beta-D-fructose 1,6-bisphosphate = D-glyceraldehyde 3-phosphate + dihydroxyacetone phosphate. It functions in the pathway carbohydrate degradation; glycolysis; D-glyceraldehyde 3-phosphate and glycerone phosphate from D-glucose: step 4/4. This Clostridium beijerinckii (strain ATCC 51743 / NCIMB 8052) (Clostridium acetobutylicum) protein is Fructose-bisphosphate aldolase class 1.